A 91-amino-acid chain; its full sequence is Small ribosomal subunit protein bS16 (91 aa).

Belongs to the bacterial ribosomal protein bS16 family.

This is Small ribosomal subunit protein bS16 from Limosilactobacillus reuteri (strain DSM 20016) (Lactobacillus reuteri).